Here is a 218-residue protein sequence, read N- to C-terminus: Ras-related protein Rab-4A (218 aa).

GTP contacts are provided by Gly-23, Thr-24, Gly-25, Lys-26, Ser-27, Cys-28, Ser-42, His-44, and Thr-45. Mg(2+) is bound at residue Ser-27. The Switch 1 signature appears at 44 to 49 (HTIGVE). Residues Thr-45 and Asp-68 each coordinate Mg(2+). The Switch 2 signature appears at 70–79 (AGQERFRSVT). Gly-71 serves as a coordination point for GTP. Gln-72 is subject to 5-glutamyl serotonin. GTP-binding residues include Asn-126, Lys-127, Asp-129, Ala-157, and Leu-158. Residue Ser-190 is modified to Phosphoserine. Ser-204 carries the post-translational modification Phosphoserine; by CDK1. 2 S-geranylgeranyl cysteine lipidation sites follow: Cys-216 and Cys-218. At Cys-218 the chain carries Cysteine methyl ester.

It belongs to the small GTPase superfamily. Rab family. Interacts with SGSM1, SGSM2 and SGSM3. Interacts with RAB11FIP1, RABEP1, ZFYVE20 and RUFY1. Interacts (membrane-bound form) with NDRG1; the interaction involves NDRG1 in vesicular recycling of E-cadherin. Interacts (in GTP-bound form) with GRIPAP1 (via N-terminus). Interacts with RABEP1 and RBSN. Does not interact with HPS4. Interacts with RABEP2; this interaction may mediate VEGFR2 cell surface expression. Requires Mg(2+) as cofactor. Post-translationally, serotonylation of Gln-72 by TGM2 during activation and aggregation of platelets leads to constitutive activation of GTPase activity. In terms of processing, phosphorylated by CDK1 kinase during mitosis.

The protein localises to the membrane. Its subcellular location is the cytoplasm. It localises to the early endosome membrane. It is found in the recycling endosome membrane. The enzyme catalyses GTP + H2O = GDP + phosphate + H(+). Its activity is regulated as follows. Regulated by guanine nucleotide exchange factors (GEFs) which promote the exchange of bound GDP for free GTP. Regulated by GTPase activating proteins (GAPs) which increase the GTP hydrolysis activity. Inhibited by GDP dissociation inhibitors (GDIs). Its function is as follows. The small GTPases Rab are key regulators of intracellular membrane trafficking, from the formation of transport vesicles to their fusion with membranes. Rabs cycle between an inactive GDP-bound form and an active GTP-bound form that is able to recruit to membranes different sets of downstream effectors directly responsible for vesicle formation, movement, tethering and fusion. RAB4A is involved in protein transport. Also plays a role in vesicular traffic. Mediates VEGFR2 endosomal trafficking to enhance VEGFR2 signaling. Acts as a regulator of platelet alpha-granule release during activation and aggregation of platelets. This chain is Ras-related protein Rab-4A, found in Rattus norvegicus (Rat).